The primary structure comprises 68 residues: Protein SlyX homolog (68 aa).

It belongs to the SlyX family.

The polypeptide is Protein SlyX homolog (Brucella anthropi (strain ATCC 49188 / DSM 6882 / CCUG 24695 / JCM 21032 / LMG 3331 / NBRC 15819 / NCTC 12168 / Alc 37) (Ochrobactrum anthropi)).